A 282-amino-acid chain; its full sequence is Alpha/beta-gliadin A-III (282 aa).

The signal sequence occupies residues 1–20; it reads MKTFLILALLAIVATTATSA. The segment covering 27 to 59 has biased composition (low complexity); the sequence is QLQPQNPSQQQPQEQVPLMQQQQQFPGQQEQFP. 2 disordered regions span residues 27-122 and 220-240; these read QLQP…AQQQ and SGQV…SVQP. Residues 60-111 are compositionally biased toward pro residues; that stretch reads PQQPYPHQQPFPSQQPYPQPQPFPPQLPYPQTQPFPPQQPYPQPQPQYPQPQ. Positions 112 to 122 are enriched in low complexity; that stretch reads QPISQQQAQQQ. Over residues 224-240 the composition is skewed to polar residues; it reads SFQSSQQNPQAQGSVQP.

This sequence belongs to the gliadin/glutenin family. Substrate of transglutaminase.

In terms of biological role, gliadin is the major seed storage protein in wheat. The sequence is that of Alpha/beta-gliadin A-III from Triticum aestivum (Wheat).